Here is a 319-residue protein sequence, read N- to C-terminus: MSSYRLGYCMKEERHNLVLCLWSQSPGILNSKCLWPFTNIHLLVGALPREGAGGAWGGGRSEQLPTCSTTHHDFTWDKKVVNPLFEKRPKNFGIGQDIQPKRDLTRFVKWPRYIRLQRQRAILYKRLKVPPAINQFTQVLDRQTATQLLKLAHKYRPETKQEKKQRLLARAEKKAAGKGDVPTKRPPVLRAGVNTVTTLVENKKAQLVVIAHDVDPIELVVFLPALCRKMGVPYCILKGKARLCRLVHRKTCTTVAFTQVNSEDKGALAKLVEAIRTNYNDRYDEIRRHWGGNVLGPKSVARIAKLEKAKAKELATKLG.

The residue at position 87 (lysine 87) is an N6-acetyllysine. Residue lysine 101 forms a Glycyl lysine isopeptide (Lys-Gly) (interchain with G-Cter in SUMO2) linkage. Lysine 150 bears the N6-acetyllysine; alternate mark. A Glycyl lysine isopeptide (Lys-Gly) (interchain with G-Cter in SUMO2); alternate cross-link involves residue lysine 150. Lysine 178 is covalently cross-linked (Glycyl lysine isopeptide (Lys-Gly) (interchain with G-Cter in SUMO2)). Lysine 270 carries the N6-acetyllysine modification. A Glycyl lysine isopeptide (Lys-Gly) (interchain with G-Cter in SUMO2) cross-link involves residue lysine 298.

The protein belongs to the eukaryotic ribosomal protein eL8 family. Component of the large ribosomal subunit. Interacts with CRY1. Interacts with DICER1, AGO2, TARBP2, MOV10 and EIF6; they form a large RNA-induced silencing complex (RISC).

The protein resides in the cytoplasm. Functionally, component of the large ribosomal subunit. The ribosome is a large ribonucleoprotein complex responsible for the synthesis of proteins in the cell. In Oryctolagus cuniculus (Rabbit), this protein is Large ribosomal subunit protein eL8 (RPL7A).